The sequence spans 316 residues: Metal cation efflux system protein CzcD (316 aa).

At 1 to 16 (MGAGHSHDHPGGNERS) the chain is on the cytoplasmic side. The helical transmembrane segment at 17 to 37 (LKIALALTGTFLIAEVVGGVM) threads the bilayer. Residues 38 to 46 (TKSLALISD) lie on the Periplasmic side of the membrane. Residues 47-67 (AAHMLTDTVALAIALAAIAIA) form a helical membrane-spanning segment. The Cytoplasmic portion of the chain corresponds to 68–81 (KRPADKKRTFGYYR). Residues 82–102 (FEILAAAFNALLLFGVAIYIL) traverse the membrane as a helical segment. Topologically, residues 103–114 (YEAYLRLKSPPQ) are periplasmic. The chain crosses the membrane as a helical span at residues 115–135 (IESTGMFVVAVLGLIINLISM). The Cytoplasmic segment spans residues 136–151 (RMLSSGQSSSLNVKGA). A run of 2 helical transmembrane segments spans residues 152 to 172 (YLEV…AIII) and 174 to 194 (FTGW…WVLP). Topologically, residues 195–316 (RTWILLKSSL…GSKSLAAGGN (122 aa)) are cytoplasmic.

It belongs to the cation diffusion facilitator (CDF) transporter (TC 2.A.4) family. SLC30A subfamily.

It is found in the cell inner membrane. Efflux is inhibited by FCCP. In terms of biological role, mediates a low-level metal ion resistance, probably by efflux of cations from the cytoplasm into the periplasm. Also mediates resistance to cobalt, cadmium and zinc via regulation of the Czc system. May repress expression of the Czc system by an export of the inducing cations. Binds and transports zinc. Can also bind cobalt, copper and nickel. In Cupriavidus metallidurans (strain ATCC 43123 / DSM 2839 / NBRC 102507 / CH34) (Ralstonia metallidurans), this protein is Metal cation efflux system protein CzcD (czcD).